Here is a 777-residue protein sequence, read N- to C-terminus: Semaphorin-4F (777 aa).

An N-terminal signal peptide occupies residues 1–40 (MLARAERPRPGPRPPPVSLFPPPSSLLLLLLAMLSAPVCG). Residues 41–667 (RVPRSVPRTS…PANRAHTVVG (627 aa)) lie on the Extracellular side of the membrane. The region spanning 48–516 (RTSLPISEAD…SHTEVTQVNT (469 aa)) is the Sema domain. Asn-70 carries an N-linked (GlcNAc...) asparagine glycan. A disulfide bridge links Cys-118 with Cys-128. Asn-139 carries an N-linked (GlcNAc...) asparagine glycan. Disulfide bonds link Cys-146-Cys-155, Cys-279-Cys-390, and Cys-303-Cys-349. Residue Asn-515 is glycosylated (N-linked (GlcNAc...) asparagine). The 52-residue stretch at 518–569 (NCGRLQSCSECILAQDPVCAWSFRLDACVAHAGEHRGMVQDIESADVSSLCP) folds into the PSI domain. Cystine bridges form between Cys-519-Cys-536, Cys-528-Cys-545, and Cys-593-Cys-634. One can recognise an Ig-like C2-type domain in the interval 586–641 (VGHVVLPCSPSSAWASCVWHQPSGVTSLTPRRDGLEVVVTPGAMGAYACECQEGGA). The chain crosses the membrane as a helical span at residues 668–688 (AGLVGFFLGVLAASLTLLLIG). Residues 689-777 (RRQQRRRQRE…PLATCDETSI (89 aa)) are Cytoplasmic-facing. The segment at 703–742 (DKVGLDLGAPPSGTTSYSQDPPSPSPEDERLPLALGKRGS) is disordered. Residues Ser-725 and Ser-727 each carry the phosphoserine modification. Residues 775–777 (TSI) carry the PDZ-binding motif.

This sequence belongs to the semaphorin family. As to quaternary structure, interacts (via PDZ-binding motif) with DLG4/SAP90 (via PDZ domain 2); this interaction may promote translocation of DLG4/SAP90 to the membrane. In terms of tissue distribution, expressed throughout the adult brain, where it shows particularly strong expression in the hippocampus, corpus callosum, granular layer and deep nuclei of the cerebellum, and the mitral layer of the olfactory bulb (at protein level). At the cellular level, detected in neuronal precursors, postmitotic neurons, pyramidal neurons, and glial cells including mature oligodendocytes and oligodendroglial precursor cells (at protein level).

The protein localises to the cell membrane. It localises to the postsynaptic density. It is found in the perikaryon. The protein resides in the cell projection. Its subcellular location is the dendrite. Probable cell surface receptor that regulates oligodendroglial precursor cell migration. Might also regulate differentiation of oligodendroglial precursor cells. Has growth cone collapse activity against retinal ganglion-cell axons. This is Semaphorin-4F (Sema4f) from Mus musculus (Mouse).